The chain runs to 244 residues: Dehydration-responsive element-binding protein 2E (244 aa).

The interval 1–25 (MEKEDNGSKQSSSASVVSSRRRRRV) is disordered. The short motif at 20–46 (RRRRRVVEPVEATLQRWEEEGLARARR) is the Nuclear localization signal element. The segment at residues 69-134 (RFRGVRQRVW…YGPYARLNFP (66 aa)) is a DNA-binding region (AP2/ERF).

Belongs to the AP2/ERF transcription factor family. ERF subfamily. Expressed in xylem tissues, stigma, anthers and region where sepals and petals attach the peduncle.

Its subcellular location is the nucleus. Transcriptional activator that binds specifically to the DNA sequence 5'-[AG]CCGAC-3'. Binding to the C-repeat/DRE element mediates abscisic acid-inducible transcription. Involved in the regulation of plant development and tolerance to abiotic stresses. This chain is Dehydration-responsive element-binding protein 2E (DREB2E), found in Arabidopsis thaliana (Mouse-ear cress).